We begin with the raw amino-acid sequence, 152 residues long: MRIGYGEDSHRLEEGRPLYLCGLLIPSPVGALAHSDGDAALHALTDALLSAYGLGDIGLLFPDTDPRWRGERSEVFLREALRLVEARGAKLLQASLVLTLDRPKLGPHRKALVDSLSRLLRLPQDRIGLTFKTSEGLAPSHVQARAVVLLDG.

2 residues coordinate a divalent metal cation: Asp8 and His10. 4-CDP-2-C-methyl-D-erythritol 2-phosphate is bound by residues 8–10 (DSH) and 34–35 (HS). A divalent metal cation is bound at residue His42. Residues 56–58 (DIG), 61–65 (FPDTD), 100–106 (LDRPKLG), and 131–135 (FKTSE) each bind 4-CDP-2-C-methyl-D-erythritol 2-phosphate.

It belongs to the IspF family. In terms of assembly, homotrimer. Requires a divalent metal cation as cofactor.

It catalyses the reaction 4-CDP-2-C-methyl-D-erythritol 2-phosphate = 2-C-methyl-D-erythritol 2,4-cyclic diphosphate + CMP. It participates in isoprenoid biosynthesis; isopentenyl diphosphate biosynthesis via DXP pathway; isopentenyl diphosphate from 1-deoxy-D-xylulose 5-phosphate: step 4/6. In terms of biological role, involved in the biosynthesis of isopentenyl diphosphate (IPP) and dimethylallyl diphosphate (DMAPP), two major building blocks of isoprenoid compounds. Catalyzes the conversion of 4-diphosphocytidyl-2-C-methyl-D-erythritol 2-phosphate (CDP-ME2P) to 2-C-methyl-D-erythritol 2,4-cyclodiphosphate (ME-CPP) with a corresponding release of cytidine 5-monophosphate (CMP). The polypeptide is 2-C-methyl-D-erythritol 2,4-cyclodiphosphate synthase (Thermus thermophilus (strain ATCC 27634 / DSM 579 / HB8)).